An 859-amino-acid polypeptide reads, in one-letter code: Low-density lipoprotein receptor-related protein 12 (859 aa).

An N-terminal signal peptide occupies residues 1 to 32 (MARRWSTKESPRWRSALLLLFLAGVYGNGALA). Over 33-492 (EHSENVHISG…ENCPVIVPTR (460 aa)) the chain is Extracellular. 2 disulfides stabilise this stretch: C47/C76 and C103/C122. Residues 47-159 (CGETPEQIRA…KGFRLAYFSG (113 aa)) form the CUB 1 domain. N75 is a glycosylation site (N-linked (GlcNAc...) asparagine). N146 carries N-linked (GlcNAc...) asparagine glycosylation. LDL-receptor class A domains lie at 165–201 (NCAC…EICA) and 214–255 (PCAY…IDCD). Intrachain disulfides connect C166–C178, C173–C191, C185–C200, C215–C232, C222–C245, C239–C254, and C259–C285. Residues 259–372 (CGQWLKYFYG…RGFNATYQVD (114 aa)) form the CUB 2 domain. N-linked (GlcNAc...) asparagine glycosylation is found at N284 and N366. LDL-receptor class A domains follow at residues 374 to 411 (FCLP…INCT), 412 to 449 (MCQK…KNCF), and 450 to 486 (FCQP…ENCP). Disulfide bonds link C375–C388, C382–C401, C395–C410, C413–C426, C420–C439, C433–C448, C451–C463, C458–C476, and C470–C485. N409 carries an N-linked (GlcNAc...) asparagine glycan. N-linked (GlcNAc...) asparagine glycosylation is present at N441. The helical transmembrane segment at 493–513 (VITAAVIGSLICGLLLVIALG) threads the bilayer. Residues 514–859 (CTCKLYSLRM…TSDDEALLLC (346 aa)) are Cytoplasmic-facing. Disordered stretches follow at residues 623 to 678 (ADGD…LPQK), 693 to 723 (ASSS…SPAR), 748 to 770 (SSVS…REDD), and 802 to 823 (QGQG…SNRD). 2 stretches are compositionally biased toward polar residues: residues 748–757 (SSVSQNQSPL) and 802–814 (QGQG…NATN).

The protein belongs to the LDLR family. In terms of assembly, may interact with RACK1, ZFYVE9 and NMRK2.

It is found in the membrane. The protein localises to the coated pit. In terms of biological role, probable receptor, which may be involved in the internalization of lipophilic molecules and/or signal transduction. May act as a tumor suppressor. This chain is Low-density lipoprotein receptor-related protein 12 (LRP12), found in Pongo abelii (Sumatran orangutan).